The chain runs to 237 residues: Lipid A 1-diphosphate synthase (237 aa).

The Cytoplasmic segment spans residues 1–5 (MIKNL). The chain crosses the membrane as a helical span at residues 6 to 26 (PQIVLLNIVGLALFLSWYIPV). At 27 to 62 (NHGFWLPIDADIFYFFNQKLVESKAFLWLVALTNNR) the chain is on the periplasmic side. The helical transmembrane segment at 63–83 (AFDGCSLLAMGMLMLSFWLKE) threads the bilayer. Topologically, residues 84–90 (NAPGRRR) are cytoplasmic. Residues 91-111 (IVIIGLVMLLTAVVLNQLGQA) form a helical membrane-spanning segment. Over 112–145 (LIPVKRASPTLTFTDINRVSELLSVPTKDASRDS) the chain is Periplasmic. A topological domain (cytoplasmic) is located at residue lysine 167. A helical transmembrane segment spans residues 168–188 (VAGLIALIIFVVFAFPRVMIG). Topologically, residues 189 to 194 (AHWFTD) are periplasmic. Residues 195–215 (IIVGSMTVILIGLPWVLLTPL) traverse the membrane as a helical segment. Residues 216–237 (SDRLITFFDKSLPGKNKHFQNK) are Cytoplasmic-facing.

Belongs to the LpxT phosphotransferase family.

Its subcellular location is the cell inner membrane. It carries out the reaction di-trans,octa-cis-undecaprenyl diphosphate + alpha-Kdo-(2-&gt;4)-alpha-Kdo-(2-&gt;6)-lipid A (E. coli) = (Kdo)2-lipid A 1-diphosphate + di-trans,octa-cis-undecaprenyl phosphate. It functions in the pathway bacterial outer membrane biogenesis; lipopolysaccharide biosynthesis. With respect to regulation, inhibited by BasR. This regulation does not occur at the level of transcription, but rather following the assembly of LpxT into the inner membrane. In terms of biological role, involved in the modification of the lipid A domain of lipopolysaccharides (LPS). Transfers a phosphate group from undecaprenyl pyrophosphate (C55-PP) to lipid A to form lipid A 1-diphosphate. Contributes to the recycling of undecaprenyl phosphate (C55-P). In vitro, has low undecaprenyl-diphosphate phosphatase activity. The protein is Lipid A 1-diphosphate synthase of Escherichia coli (strain K12).